Reading from the N-terminus, the 243-residue chain is 23S rRNA (guanosine-2'-O-)-methyltransferase RlmB (243 aa).

S-adenosyl-L-methionine is bound by residues Gly-196, Ile-216, and Leu-225.

Belongs to the class IV-like SAM-binding methyltransferase superfamily. RNA methyltransferase TrmH family. RlmB subfamily. Homodimer.

It localises to the cytoplasm. It carries out the reaction guanosine(2251) in 23S rRNA + S-adenosyl-L-methionine = 2'-O-methylguanosine(2251) in 23S rRNA + S-adenosyl-L-homocysteine + H(+). In terms of biological role, specifically methylates the ribose of guanosine 2251 in 23S rRNA. The polypeptide is 23S rRNA (guanosine-2'-O-)-methyltransferase RlmB (Salmonella typhimurium (strain LT2 / SGSC1412 / ATCC 700720)).